Here is a 1023-residue protein sequence, read N- to C-terminus: Rho GTPase-activating protein 11A (1023 aa).

One can recognise a Rho-GAP domain in the interval 49–239 (VPFNALPHSA…TLIDYASDIG (191 aa)). S285 is modified (phosphoserine). Residue T306 is modified to Phosphothreonine. Phosphoserine occurs at positions 316 and 318. T323 carries the post-translational modification Phosphothreonine. Phosphoserine is present on residues S339, S340, and S484. At T508 the chain carries Phosphothreonine. The disordered stretch occupies residues 567–589 (TPSNLNNKHNSNITSSPLSGDEN). 4 positions are modified to phosphoserine: S582, S585, S638, and S675. The disordered stretch occupies residues 714–734 (KQEFSSDEEIKKQQSPKDKLN). The span at 721 to 734 (EEIKKQQSPKDKLN) shows a compositional bias: basic and acidic residues. Position 847 is a phosphoserine (S847). Position 866 is a phosphothreonine (T866). S868 is modified (phosphoserine). The tract at residues 999 to 1023 (AWYKGSPKHPIGKTQLLPTSKPVDL) is disordered.

Its subcellular location is the nucleus. GTPase activator for the Rho-type GTPases by converting them to an inactive GDP-bound state. This is Rho GTPase-activating protein 11A from Homo sapiens (Human).